The following is a 161-amino-acid chain: NAD(P)H-quinone oxidoreductase subunit I, chloroplastic (161 aa).

2 4Fe-4S ferredoxin-type domains span residues Gly55–Lys84 and Leu95–Glu124. [4Fe-4S] cluster is bound by residues Cys64, Cys67, Cys70, Cys74, Cys104, Cys107, Cys110, and Cys114.

Belongs to the complex I 23 kDa subunit family. NDH is composed of at least 16 different subunits, 5 of which are encoded in the nucleus. Requires [4Fe-4S] cluster as cofactor.

Its subcellular location is the plastid. The protein resides in the chloroplast thylakoid membrane. The enzyme catalyses a plastoquinone + NADH + (n+1) H(+)(in) = a plastoquinol + NAD(+) + n H(+)(out). It catalyses the reaction a plastoquinone + NADPH + (n+1) H(+)(in) = a plastoquinol + NADP(+) + n H(+)(out). Its function is as follows. NDH shuttles electrons from NAD(P)H:plastoquinone, via FMN and iron-sulfur (Fe-S) centers, to quinones in the photosynthetic chain and possibly in a chloroplast respiratory chain. The immediate electron acceptor for the enzyme in this species is believed to be plastoquinone. Couples the redox reaction to proton translocation, and thus conserves the redox energy in a proton gradient. The sequence is that of NAD(P)H-quinone oxidoreductase subunit I, chloroplastic from Lotus japonicus (Lotus corniculatus var. japonicus).